The sequence spans 310 residues: Malate dehydrogenase (310 aa).

NAD(+)-binding positions include 7–13 (GAAGGIG) and Asp34. Substrate is bound by residues Arg81 and Arg87. NAD(+)-binding positions include Asn94 and 117–119 (ITN). Asn119 and Arg153 together coordinate substrate. The active-site Proton acceptor is the His177. Met227 contributes to the NAD(+) binding site.

Belongs to the LDH/MDH superfamily. MDH type 1 family. In terms of assembly, homodimer.

The enzyme catalyses (S)-malate + NAD(+) = oxaloacetate + NADH + H(+). In terms of biological role, catalyzes the reversible oxidation of malate to oxaloacetate. The chain is Malate dehydrogenase from Pseudoalteromonas translucida (strain TAC 125).